A 105-amino-acid polypeptide reads, in one-letter code: ATP-dependent Clp protease adapter protein ClpS (105 aa).

The protein belongs to the ClpS family. Binds to the N-terminal domain of the chaperone ClpA.

In terms of biological role, involved in the modulation of the specificity of the ClpAP-mediated ATP-dependent protein degradation. In Aeromonas hydrophila subsp. hydrophila (strain ATCC 7966 / DSM 30187 / BCRC 13018 / CCUG 14551 / JCM 1027 / KCTC 2358 / NCIMB 9240 / NCTC 8049), this protein is ATP-dependent Clp protease adapter protein ClpS.